An 855-amino-acid polypeptide reads, in one-letter code: Pentatricopeptide repeat-containing protein At1g74750 (855 aa).

The segment at 21–40 (GSRPSAADGNSCTCAEDESG) is disordered. 8 PPR repeats span residues 358 to 392 (DGHTYTTMVGNLGRAKQFGEINKLLDEMVRDGCKP), 393 to 427 (NTVTYNRLIHSYGRANYLKEAMNVFNQMQEAGCEP), 428 to 462 (DRVTYCTLIDIHAKAGFLDIAMDMYQRMQEAGLSP), 463 to 497 (DTFTYSVIINCLGKAGHLPAAHRLFCEMVGQGCTP), 498 to 532 (NLVTFNIMIALHAKARNYETALKLYRDMQNAGFQP), 533 to 567 (DKVTYSIVMEVLGHCGFLEEAEGVFAEMQRKNWVP), 568 to 602 (DEPVYGLLVDLWGKAGNVDKAWQWYQAMLQAGLRP), and 603 to 637 (NVPTCNSLLSTFLRVHRMSEAYNLLQSMLALGLHP). Positions 755 to 838 (INLHVMSEGT…NSGCFVGSGE (84 aa)) constitute a Smr domain.

Belongs to the PPR family. P subfamily.

In Arabidopsis thaliana (Mouse-ear cress), this protein is Pentatricopeptide repeat-containing protein At1g74750.